Reading from the N-terminus, the 266-residue chain is Glycine--tRNA ligase beta subunit (266 aa).

Belongs to the class-II aminoacyl-tRNA synthetase family. As to quaternary structure, tetramer of two alpha and two beta subunits.

It localises to the cytoplasm. The catalysed reaction is tRNA(Gly) + glycine + ATP = glycyl-tRNA(Gly) + AMP + diphosphate. In Moraxella catarrhalis (Branhamella catarrhalis), this protein is Glycine--tRNA ligase beta subunit (glyS).